Reading from the N-terminus, the 334-residue chain is Leukocyte cell-derived chemotaxin 1 (334 aa).

A helical membrane pass occupies residues 46-66; that stretch reads VVLISGAVLLLFGAIGAFYFW. A BRICHOS domain is found at 105–201; sequence GSGAEEAIEV…LCGDLPIFWL (97 aa). Residues Cys-132 and Cys-193 are joined by a disulfide bond. Positions 211 to 214 are excised as a propeptide; the sequence is RERR. The tract at residues 212-270 is disordered; it reads ERREVVRNSAPSTTRRPHSEPRGNAGPGRLSNGTRPNVQDDAEPFNPDNPYHQQEGESM. A glycan (N-linked (GlcNAc...) asparagine) is linked at Asn-243. 4 disulfides stabilise this stretch: Cys-282–Cys-286, Cys-283–Cys-323, Cys-293–Cys-317, and Cys-297–Cys-313.

The protein belongs to the chondromodulin-1 family. Post-translationally, after cleavage, the post-translationally modified ChM-I is secreted as a glycoprotein. In terms of tissue distribution, detected in the four cardiac valves, valvular interstitial cells and extracellular matrix (at protein level).

The protein localises to the secreted. The protein resides in the extracellular space. It is found in the extracellular matrix. Its subcellular location is the endomembrane system. Functionally, bifunctional growth regulator that stimulates the growth of cultured chondrocytes in the presence of basic fibroblast growth factor (FGF) but inhibits the growth of cultured vascular endothelial cells. May contribute to the rapid growth of cartilage and vascular invasion prior to the replacement of cartilage by bone during endochondral bone development. Inhibits in vitro tube formation and mobilization of endothelial cells. Plays a role as antiangiogenic factor in cardiac valves to suppress neovascularization. In Mus musculus (Mouse), this protein is Leukocyte cell-derived chemotaxin 1.